The following is a 232-amino-acid chain: RNA chaperone ProQ (232 aa).

Positions 105-182 are disordered; sequence EAKARVQAQR…REEQHTPVSD (78 aa). The span at 117-136 shows a compositional bias: basic and acidic residues; sequence QQAKKREAAAAAGEKEDAPR. Residues 137-146 show a composition bias toward basic residues; the sequence is RERKPRPTTP. Basic and acidic residues predominate over residues 147–177; sequence RRKEGAERKPRAQKPVEKAPKTVKAPREEQH.

Belongs to the ProQ family.

The protein resides in the cytoplasm. Its function is as follows. RNA chaperone with significant RNA binding, RNA strand exchange and RNA duplexing activities. May regulate ProP activity through an RNA-based, post-transcriptional mechanism. The sequence is that of RNA chaperone ProQ from Shigella boydii serotype 18 (strain CDC 3083-94 / BS512).